The sequence spans 954 residues: Glycine dehydrogenase (decarboxylating) (954 aa).

Position 706 is an N6-(pyridoxal phosphate)lysine (K706).

Belongs to the GcvP family. In terms of assembly, the glycine cleavage system is composed of four proteins: P, T, L and H. Pyridoxal 5'-phosphate serves as cofactor.

The catalysed reaction is N(6)-[(R)-lipoyl]-L-lysyl-[glycine-cleavage complex H protein] + glycine + H(+) = N(6)-[(R)-S(8)-aminomethyldihydrolipoyl]-L-lysyl-[glycine-cleavage complex H protein] + CO2. In terms of biological role, the glycine cleavage system catalyzes the degradation of glycine. The P protein binds the alpha-amino group of glycine through its pyridoxal phosphate cofactor; CO(2) is released and the remaining methylamine moiety is then transferred to the lipoamide cofactor of the H protein. The chain is Glycine dehydrogenase (decarboxylating) from Pseudomonas syringae pv. tomato (strain ATCC BAA-871 / DC3000).